Here is a 172-residue protein sequence, read N- to C-terminus: Type IV secretion system putative outer membrane lipoprotein BMEII0036 (172 aa).

Residues 1–15 (MRTLVMVACAVSLAA) form the signal peptide. The N-palmitoyl cysteine moiety is linked to residue cysteine 16. Residue cysteine 16 is the site of S-diacylglycerol cysteine attachment. Residues 58–172 (WPARPPKQTV…RRVDIEILRK (115 aa)) form the OmpA-like domain.

The protein resides in the cell outer membrane. The polypeptide is Type IV secretion system putative outer membrane lipoprotein BMEII0036 (Brucella melitensis biotype 1 (strain ATCC 23456 / CCUG 17765 / NCTC 10094 / 16M)).